The following is a 516-amino-acid chain: Pickpocket protein 11 (516 aa).

Transmembrane regions (helical) follow at residues 117–137 and 454–474; these read ILWW…VIMS and FIGT…VSVF.

This sequence belongs to the amiloride-sensitive sodium channel (TC 1.A.6) family. Expressed in embryonic and larval tracheal systems in the dorsal trunk and transverse connective (TC), but not in the junction between the dorsal trunk and TC, and in several tracheal branches and terminal cells. In larvae, also expressed in ventral pits. Expressed in the taste-sensing terminal organ of the larval head. In adult, expressed in hairs on the tibia, femur, tarsi of the leg and wing margin.

The protein localises to the membrane. Its function is as follows. Part of a complex that plays a role in tracheal liquid clearance. In both larvae and adults, contributes to the behavioral response to salt. Probable role in sodium transport. The polypeptide is Pickpocket protein 11 (ppk11) (Drosophila melanogaster (Fruit fly)).